Reading from the N-terminus, the 756-residue chain is Protein O-mannosyl-transferase 2 (756 aa).

A run of 7 helical transmembrane segments spans residues Ala-64–Tyr-84, Thr-110–Leu-130, Ala-156–Leu-176, Ser-179–Leu-199, Ile-203–Phe-223, Cys-245–Ile-265, and Val-293–Ile-313. MIR domains are found at residues Pro-344–Leu-400, Pro-410–Cys-466, and Gly-471–His-528. 4 consecutive transmembrane segments (helical) span residues Pro-602–Ala-622, Leu-643–Ile-663, His-672–Leu-692, and Ser-713–Met-733.

The protein belongs to the glycosyltransferase 39 family. As to expression, widely expressed. Has particularly strong expression in ovary, testis, liver, brain, muscle, heart and eye.

The protein resides in the endoplasmic reticulum membrane. It carries out the reaction a di-trans,poly-cis-dolichyl beta-D-mannosyl phosphate + L-seryl-[protein] = 3-O-(alpha-D-mannosyl)-L-seryl-[protein] + a di-trans,poly-cis-dolichyl phosphate + H(+). It catalyses the reaction a di-trans,poly-cis-dolichyl beta-D-mannosyl phosphate + L-threonyl-[protein] = 3-O-(alpha-D-mannosyl)-L-threonyl-[protein] + a di-trans,poly-cis-dolichyl phosphate + H(+). It participates in protein modification; protein glycosylation. In terms of biological role, transfers mannosyl residues to the hydroxyl group of serine or threonine residues. Coexpression of both POMT1 and POMT2 is necessary for enzyme activity, expression of either POMT1 or POMT2 alone is insufficient. The sequence is that of Protein O-mannosyl-transferase 2 from Danio rerio (Zebrafish).